The sequence spans 138 residues: uncharacterized protein (138 aa).

The MsrB domain maps to 9–133 (EDEWKKELGP…NSASLEFHNE (125 aa)). Zn(2+)-binding residues include Cys49, Cys52, Cys97, and Cys100. The active-site Nucleophile is the Cys122.

The protein belongs to the MsrB Met sulfoxide reductase family. It depends on Zn(2+) as a cofactor.

It localises to the cytoplasm. Its subcellular location is the nucleus. This is an uncharacterized protein from Schizosaccharomyces pombe (strain 972 / ATCC 24843) (Fission yeast).